A 418-amino-acid chain; its full sequence is Tyrosine--tRNA ligase (418 aa).

Position 34 (Tyr-34) interacts with L-tyrosine. Positions 39 to 48 (PTADSLHLGH) match the 'HIGH' region motif. L-tyrosine is bound by residues Tyr-169 and Gln-173. Positions 229–233 (KFGKS) match the 'KMSKS' region motif. Position 232 (Lys-232) interacts with ATP. The region spanning 352–418 (LNIVDMLVTA…GKKKYAVLTY (67 aa)) is the S4 RNA-binding domain.

It belongs to the class-I aminoacyl-tRNA synthetase family. TyrS type 1 subfamily. In terms of assembly, homodimer.

It localises to the cytoplasm. It carries out the reaction tRNA(Tyr) + L-tyrosine + ATP = L-tyrosyl-tRNA(Tyr) + AMP + diphosphate + H(+). Functionally, catalyzes the attachment of tyrosine to tRNA(Tyr) in a two-step reaction: tyrosine is first activated by ATP to form Tyr-AMP and then transferred to the acceptor end of tRNA(Tyr). In Streptococcus equi subsp. zooepidemicus (strain H70), this protein is Tyrosine--tRNA ligase.